Here is a 578-residue protein sequence, read N- to C-terminus: Proline--tRNA ligase (578 aa).

Belongs to the class-II aminoacyl-tRNA synthetase family. ProS type 1 subfamily. As to quaternary structure, homodimer.

Its subcellular location is the cytoplasm. The enzyme catalyses tRNA(Pro) + L-proline + ATP = L-prolyl-tRNA(Pro) + AMP + diphosphate. Its function is as follows. Catalyzes the attachment of proline to tRNA(Pro) in a two-step reaction: proline is first activated by ATP to form Pro-AMP and then transferred to the acceptor end of tRNA(Pro). As ProRS can inadvertently accommodate and process non-cognate amino acids such as alanine and cysteine, to avoid such errors it has two additional distinct editing activities against alanine. One activity is designated as 'pretransfer' editing and involves the tRNA(Pro)-independent hydrolysis of activated Ala-AMP. The other activity is designated 'posttransfer' editing and involves deacylation of mischarged Ala-tRNA(Pro). The misacylated Cys-tRNA(Pro) is not edited by ProRS. This Brachyspira hyodysenteriae (strain ATCC 49526 / WA1) protein is Proline--tRNA ligase.